Consider the following 485-residue polypeptide: N-succinylglutamate 5-semialdehyde dehydrogenase (485 aa).

220–225 (GSANTG) is an NAD(+) binding site. Residues E243 and C278 contribute to the active site.

The protein belongs to the aldehyde dehydrogenase family. AstD subfamily.

The catalysed reaction is N-succinyl-L-glutamate 5-semialdehyde + NAD(+) + H2O = N-succinyl-L-glutamate + NADH + 2 H(+). It participates in amino-acid degradation; L-arginine degradation via AST pathway; L-glutamate and succinate from L-arginine: step 4/5. Functionally, catalyzes the NAD-dependent reduction of succinylglutamate semialdehyde into succinylglutamate. The chain is N-succinylglutamate 5-semialdehyde dehydrogenase from Vibrio vulnificus (strain YJ016).